A 112-amino-acid polypeptide reads, in one-letter code: Peptidyl-prolyl cis-trans isomerase (112 aa).

Positions 1-22 (MGVEKQVISSGNGQDFPKPGDR) are disordered. In terms of domain architecture, PPIase FKBP-type spans 20-108 (GDRITMHYTG…LFDVELLAIN (89 aa)).

This sequence belongs to the FKBP-type PPIase family. FKBP1 subfamily.

Its subcellular location is the cytoplasm. The protein resides in the nucleus. It catalyses the reaction [protein]-peptidylproline (omega=180) = [protein]-peptidylproline (omega=0). PPIases accelerate the folding of proteins. It catalyzes the cis-trans isomerization of proline imidic peptide bonds in oligopeptides. Has an important role in sexual development and serves as the target for rapamycin action. In Schizosaccharomyces pombe (strain 972 / ATCC 24843) (Fission yeast), this protein is Peptidyl-prolyl cis-trans isomerase (fkh1).